Here is an 840-residue protein sequence, read N- to C-terminus: Translation initiation factor IF-2 (840 aa).

Residues 1-251 form a disordered region; that stretch reads MTEEKKFSSS…GPAVPATERK (251 aa). Composition is skewed to polar residues over residues 38 to 50 and 65 to 83; these read DGTN…TPRS and NRHT…ASRP. Positions 84–102 are enriched in low complexity; it reads NQSKSQGQGGRNNQRPGSR. 2 stretches are compositionally biased toward basic and acidic residues: residues 110-135 and 158-168; these read PMIR…KTDN and KPAEQSKKAAE. A compositionally biased stretch (low complexity) spans 169 to 207; sequence KPAQTKPKTAETKTTATTTQSGTGKFGGALASGNNSARN. Residues 230–239 are compositionally biased toward basic residues; the sequence is GSKKSRRIAA. Residues 341–510 form the tr-type G domain; sequence ARPPVVTIMG…LLQAEVLELK (170 aa). The G1 stretch occupies residues 350–357; sequence GHVDHGKT. 350–357 is a GTP binding site; the sequence is GHVDHGKT. The G2 stretch occupies residues 375-379; that stretch reads GITQH. The segment at 396–399 is G3; the sequence is DTPG. GTP contacts are provided by residues 396–400 and 450–453; these read DTPGH and NKID. The G4 stretch occupies residues 450-453; that stretch reads NKID. Residues 486 to 488 form a G5 region; the sequence is SAK.

The protein belongs to the TRAFAC class translation factor GTPase superfamily. Classic translation factor GTPase family. IF-2 subfamily.

It localises to the cytoplasm. One of the essential components for the initiation of protein synthesis. Protects formylmethionyl-tRNA from spontaneous hydrolysis and promotes its binding to the 30S ribosomal subunits. Also involved in the hydrolysis of GTP during the formation of the 70S ribosomal complex. The polypeptide is Translation initiation factor IF-2 (Leuconostoc citreum (strain KM20)).